Consider the following 1178-residue polypeptide: Integrin alpha-2 (1178 aa).

An N-terminal signal peptide occupies residues 1-26 (MGPGQAGGALLLRLLMLVQGILNCLA). Topologically, residues 27 to 1129 (YNVGLPGAKI…KPTEKAEVPT (1103 aa)) are extracellular. 2 FG-GAP repeats span residues 31 to 89 (LPGA…TATC) and 98 to 158 (ASIS…FLTS). C80 and C89 are disulfide-bonded. 2 N-linked (GlcNAc...) asparagine glycosylation sites follow: N102 and N109. Positions 185 to 362 (WEAVKNFLVK…TLGEQIFSIE (178 aa)) constitute a VWFA domain. FG-GAP repeat units follow at residues 363 to 417 (GTVQ…VIFP), 420 to 472 (AFDQ…KQGN), 474 to 536 (TVIQ…ILNQ), 537 to 595 (HQFL…TIRT), and 601 to 661 (ILGS…FTPD). 3 N-linked (GlcNAc...) asparagine glycosylation sites follow: N429, N457, and N472. Positions 480 to 482 (RGD) match the Cell attachment site motif. Residues D496, D498, D500, D504, D560, N562, D564, D568, D624, N626, D628, and D632 each contribute to the Ca(2+) site. 5 cysteine pairs are disulfide-bonded: C677–C734, C786–C792, C862–C873, C1016–C1047, and C1052–C1057. Residue N696 is glycosylated (N-linked (GlcNAc...) asparagine). 3 N-linked (GlcNAc...) asparagine glycosylation sites follow: N1054, N1071, and N1078. Residues 1130-1151 (GVIIGSIIAGILLLLAMTAGLW) form a helical membrane-spanning segment. Topologically, residues 1152–1178 (KLGFFKRQYKKMGQNPDEMDETTELNS) are cytoplasmic. The GFFKR motif motif lies at 1154–1158 (GFFKR).

It belongs to the integrin alpha chain family. As to quaternary structure, heterodimer of an alpha and a beta subunit. Alpha-2 associates with beta-1. Interacts with HPS5 and RAB21.

It localises to the membrane. In terms of biological role, integrin alpha-2/beta-1 is a collagen receptor, being responsible for adhesion of platelets and other cells to collagens, modulation of collagen and collagenase gene expression, force generation and organization of newly synthesized extracellular matrix. It is also a receptor for laminins, collagen C-propeptides and E-cadherin. Mice homozygous for a null mutation in the alpha-2 die very early in embryogenesis. The chain is Integrin alpha-2 (Itga2) from Mus musculus (Mouse).